Reading from the N-terminus, the 110-residue chain is U1-lycotoxin-Ls1mm (110 aa).

Positions 1 to 20 are cleaved as a signal peptide; that stretch reads MKFVLLFGVLLVTLFSYSSA. The propeptide occupies 21–44; the sequence is EMLDDFDQADEDELLSLIEKEEAR. 4 disulfides stabilise this stretch: Cys-47-Cys-62, Cys-54-Cys-71, Cys-61-Cys-89, and Cys-73-Cys-87.

The protein belongs to the neurotoxin 19 (CSTX) family. 03 subfamily. As to expression, expressed by the venom gland.

The protein localises to the secreted. The polypeptide is U1-lycotoxin-Ls1mm (Lycosa singoriensis (Wolf spider)).